We begin with the raw amino-acid sequence, 140 residues long: uncharacterized protein (140 aa).

This sequence belongs to the MG067/MG068/MG395 family.

This is an uncharacterized protein from Mycoplasma pneumoniae (strain ATCC 29342 / M129 / Subtype 1) (Mycoplasmoides pneumoniae).